The primary structure comprises 256 residues: Triosephosphate isomerase (256 aa).

9 to 11 (NWK) serves as a coordination point for substrate. Histidine 97 acts as the Electrophile in catalysis. Glutamate 169 acts as the Proton acceptor in catalysis. Substrate-binding positions include glycine 175, serine 214, and 235 to 236 (GG).

This sequence belongs to the triosephosphate isomerase family. Homodimer.

The protein resides in the cytoplasm. It catalyses the reaction D-glyceraldehyde 3-phosphate = dihydroxyacetone phosphate. The protein operates within carbohydrate biosynthesis; gluconeogenesis. Its pathway is carbohydrate degradation; glycolysis; D-glyceraldehyde 3-phosphate from glycerone phosphate: step 1/1. Functionally, involved in the gluconeogenesis. Catalyzes stereospecifically the conversion of dihydroxyacetone phosphate (DHAP) to D-glyceraldehyde-3-phosphate (G3P). The sequence is that of Triosephosphate isomerase from Vibrio vulnificus (strain CMCP6).